We begin with the raw amino-acid sequence, 1153 residues long: Error-prone DNA polymerase (1153 aa).

Disordered regions lie at residues 1 to 39 (MFYSCCVSIEPRDPASEPTPTPRRPLRKSQPRSFSQAQP) and 64 to 89 (VGEGQRRTTSLDPAEAEGTGAEGASQ).

It belongs to the DNA polymerase type-C family. DnaE2 subfamily.

Its subcellular location is the cytoplasm. The catalysed reaction is DNA(n) + a 2'-deoxyribonucleoside 5'-triphosphate = DNA(n+1) + diphosphate. Functionally, DNA polymerase involved in damage-induced mutagenesis and translesion synthesis (TLS). It is not the major replicative DNA polymerase. The polypeptide is Error-prone DNA polymerase (Corynebacterium jeikeium (strain K411)).